Here is a 177-residue protein sequence, read N- to C-terminus: Platelet glycoprotein IX (177 aa).

The signal sequence occupies residues 1–16; the sequence is MPAWGALFLLWATAEA. The 35-residue stretch at 17-51 folds into the LRRNT domain; the sequence is TKDCPSPCTCRALETMGLWVDCRGHGLTALPALPA. Residues 17–147 lie on the Extracellular side of the membrane; the sequence is TKDCPSPCTC…QLQASWVRPG (131 aa). Asn-60 carries N-linked (GlcNAc...) asparagine glycosylation. The LRR repeat unit spans residues 60–83; sequence NNSLQSVPPGAFDHLPQLQTLDVT. The LRRCT domain maps to 85-137; it reads NPWHCDCSLTYLRLWLEDRTPEALLQVRCASPSLAAHGPLGRLTGYQLGSCGW. Residues 148-168 traverse the membrane as a helical segment; that stretch reads VLWDVALVAVAALGLALLAGL. At 169–177 the chain is on the cytoplasmic side; the sequence is LCATTEALD.

Two GP-Ib beta are disulfide-linked to one GP-Ib alpha. GP-IX is complexed with the GP-Ib heterodimer via a non covalent linkage.

The protein localises to the membrane. In terms of biological role, the GPIb-V-IX complex functions as the vWF receptor and mediates vWF-dependent platelet adhesion to blood vessels. The adhesion of platelets to injured vascular surfaces in the arterial circulation is a critical initiating event in hemostasis. GP-IX may provide for membrane insertion and orientation of GP-Ib. The polypeptide is Platelet glycoprotein IX (GP9) (Homo sapiens (Human)).